The chain runs to 21 residues: Misgurin (21 aa).

The disordered stretch occupies residues 1–21; sequence RQRVEELSKFSKKGAAARRRK. Residues 10–21 show a composition bias toward basic residues; it reads FSKKGAAARRRK.

The protein localises to the secreted. Its function is as follows. Strong antimicrobial activity against several Gram-positive and Gram-negative bacteria and fungi. The sequence is that of Misgurin from Misgurnus anguillicaudatus (Oriental weatherloach).